We begin with the raw amino-acid sequence, 125 residues long: Large ribosomal subunit protein bL12 (125 aa).

This sequence belongs to the bacterial ribosomal protein bL12 family. Homodimer. Part of the ribosomal stalk of the 50S ribosomal subunit. Forms a multimeric L10(L12)X complex, where L10 forms an elongated spine to which 2 to 4 L12 dimers bind in a sequential fashion. Binds GTP-bound translation factors.

Forms part of the ribosomal stalk which helps the ribosome interact with GTP-bound translation factors. Is thus essential for accurate translation. This chain is Large ribosomal subunit protein bL12, found in Rickettsia felis (strain ATCC VR-1525 / URRWXCal2) (Rickettsia azadi).